We begin with the raw amino-acid sequence, 417 residues long: Serine--tRNA ligase (417 aa).

226-228 (TSE) serves as a coordination point for L-serine. ATP contacts are provided by residues 257–259 (RRE) and V273. E280 contacts L-serine. 344–347 (ELTS) contributes to the ATP binding site. T379 lines the L-serine pocket.

The protein belongs to the class-II aminoacyl-tRNA synthetase family. Type-1 seryl-tRNA synthetase subfamily. Homodimer. The tRNA molecule binds across the dimer.

It is found in the cytoplasm. The enzyme catalyses tRNA(Ser) + L-serine + ATP = L-seryl-tRNA(Ser) + AMP + diphosphate + H(+). It carries out the reaction tRNA(Sec) + L-serine + ATP = L-seryl-tRNA(Sec) + AMP + diphosphate + H(+). Its pathway is aminoacyl-tRNA biosynthesis; selenocysteinyl-tRNA(Sec) biosynthesis; L-seryl-tRNA(Sec) from L-serine and tRNA(Sec): step 1/1. In terms of biological role, catalyzes the attachment of serine to tRNA(Ser). Is also able to aminoacylate tRNA(Sec) with serine, to form the misacylated tRNA L-seryl-tRNA(Sec), which will be further converted into selenocysteinyl-tRNA(Sec). The polypeptide is Serine--tRNA ligase (Mycolicibacterium smegmatis (strain ATCC 700084 / mc(2)155) (Mycobacterium smegmatis)).